The sequence spans 121 residues: MTREEIIQAIKEMSVLDLNELVKACEEEFGVSAAAAVVAGGAVAGGAAAEEKTEFDVVLASAGDNKIKVIKVVREITGLGLKEAKEIVDGAPKTLKEGVSKDEAEDMKAKLAEVGATAEVK.

It belongs to the bacterial ribosomal protein bL12 family. In terms of assembly, homodimer. Part of the ribosomal stalk of the 50S ribosomal subunit. Forms a multimeric L10(L12)X complex, where L10 forms an elongated spine to which 2 to 4 L12 dimers bind in a sequential fashion. Binds GTP-bound translation factors.

Its function is as follows. Forms part of the ribosomal stalk which helps the ribosome interact with GTP-bound translation factors. Is thus essential for accurate translation. This chain is Large ribosomal subunit protein bL12, found in Clostridium beijerinckii (strain ATCC 51743 / NCIMB 8052) (Clostridium acetobutylicum).